Consider the following 395-residue polypeptide: Phosphoglycerate kinase (395 aa).

Residues 21-23 (DFN), arginine 36, 59-62 (HLGR), arginine 120, and arginine 153 each bind substrate. ATP-binding positions include lysine 203, glycine 294, glutamate 325, and 351 to 354 (GGDS).

The protein belongs to the phosphoglycerate kinase family. As to quaternary structure, monomer.

The protein resides in the cytoplasm. It catalyses the reaction (2R)-3-phosphoglycerate + ATP = (2R)-3-phospho-glyceroyl phosphate + ADP. Its pathway is carbohydrate degradation; glycolysis; pyruvate from D-glyceraldehyde 3-phosphate: step 2/5. This chain is Phosphoglycerate kinase, found in Finegoldia magna (strain ATCC 29328 / DSM 20472 / WAL 2508) (Peptostreptococcus magnus).